The following is a 144-amino-acid chain: Peptide methionine sulfoxide reductase MsrB (144 aa).

A MsrB domain is found at lysine 6–lysine 128. Catalysis depends on cysteine 117, which acts as the Nucleophile.

The protein belongs to the MsrB Met sulfoxide reductase family.

The catalysed reaction is L-methionyl-[protein] + [thioredoxin]-disulfide + H2O = L-methionyl-(R)-S-oxide-[protein] + [thioredoxin]-dithiol. The chain is Peptide methionine sulfoxide reductase MsrB from Shouchella clausii (strain KSM-K16) (Alkalihalobacillus clausii).